The primary structure comprises 345 residues: Anthranilate phosphoribosyltransferase (345 aa).

Residues Gly-79, 82–83, Thr-87, 89–92, 106–114, and Ser-118 contribute to the 5-phospho-alpha-D-ribose 1-diphosphate site; these read GD, NVST, and KHGNRAVSG. Position 79 (Gly-79) interacts with anthranilate. Ser-91 serves as a coordination point for Mg(2+). Position 109 (Asn-109) interacts with anthranilate. Residue Arg-164 participates in anthranilate binding. Mg(2+) is bound by residues Asp-223 and Glu-224.

The protein belongs to the anthranilate phosphoribosyltransferase family. Homodimer. Mg(2+) is required as a cofactor.

It carries out the reaction N-(5-phospho-beta-D-ribosyl)anthranilate + diphosphate = 5-phospho-alpha-D-ribose 1-diphosphate + anthranilate. It participates in amino-acid biosynthesis; L-tryptophan biosynthesis; L-tryptophan from chorismate: step 2/5. Its function is as follows. Catalyzes the transfer of the phosphoribosyl group of 5-phosphorylribose-1-pyrophosphate (PRPP) to anthranilate to yield N-(5'-phosphoribosyl)-anthranilate (PRA). The chain is Anthranilate phosphoribosyltransferase from Saccharolobus islandicus (strain L.S.2.15 / Lassen #1) (Sulfolobus islandicus).